The following is an 816-amino-acid chain: MGDTVVAPAPLKPASESTPGPPGNNGGSLLSVITEGVGELSVIDPEVAQKACQEVLQKVKLSHGGVASSDRGTPLELVNGDGVDGEIRCLDDPPTGIREEDDETEATVASGTAKGARRRRQNNSAKQSWLLRLFESKLFDISMAISYLYNSKEPGVQAYIGNRLFCFRNEDVDFYLPQLLNMYVHMDEDVGDAIKPYIVHRCRQSVDFSLQCALLLGAYSSDMHISTQRHSRGTKLRRLILSDELKPAHRKRELPSLSPAPDTGLSPSKRTHQRSKSDATASISLSSSLKRTASNPKVESEDEELSSSTESIDNSFSSPVRLAPEREFIKSLMAIGKRLATLPTKEQKTQRLISELSLLNHKLPARVWLPTAGFDHHVVRVPHTQAVVLNSKDKAPYLIYVEVLECENFDTTSVPARIPENRIRSTRSVENLPECGISHEQRAGSFSTVPNYDNDDEAWSVDDIGELQVELPEMHTNSCDNISQFSVDSITSQESKEPVFIAAGDIRRRLSEQLAHTPTAFKRDPEDPSAVALKEPWQEKVRRIREGSPYGHLPNWRLLSVIVKCGDDLRQELLAFQVLKQLQSIWEQERVPLWIKPYKILVISADSGMIEPVVNAVSIHQVKKQSQLSLLDYFLQEHGSYTTEAFLSAQRNFVQSCAGYCLVCYLLQVKDRHNGNILLDAEGHIIHIDFGFILSSSPRNLGFETSAFKLTTEFVDVMGGLDGDMFNYYKMLMLQGLIAARKHMDKVVQIVEIMQQGSQLPCFHGSSTIRNLKERFHMSMTEEQLQLLVEQMVDGSMRSITTKLYDGFQYLTNGIM.

3 disordered regions span residues M1 to S28, P93 to R120, and H249 to S318. G2 carries the N-acetylglycine modification. An interaction with ACBD3 region spans residues G2–S68. The PIK helical domain maps to Q49 to S242. Position 258 is a phosphoserine (S258). Residue T263 is modified to Phosphothreonine. Residues S266, S275, S277, S284, S294, S428, and S511 each carry the phosphoserine modification. Low complexity predominate over residues D278–S294. Residues T517 and T519 each carry the phosphothreonine modification. The PI3K/PI4K catalytic domain occupies E535–T801. The interval V541–G547 is G-loop. Positions Q668–N676 are catalytic loop. The activation loop stretch occupies residues H687–T711.

This sequence belongs to the PI3/PI4-kinase family. Type III PI4K subfamily. As to quaternary structure, interacts with ARF1 and ARF3 in the Golgi complex, but not with ARF4, ARF5 or ARF6. Interacts with NCS1/FREQ in a calcium-independent manner. Interacts with CALN1/CABP8 and CALN2/CABP7; in a calcium-dependent manner; this interaction competes with NCS1/FREQ binding. Interacts with ACBD3. Interacts with ARMH3, YWHAB, YWHAE, YWHAG, YWHAH, YWHAQ, YWHAZ and SFN. Interacts with GGA2 (via VHS domain); the interaction is important for PI4KB location at the Golgi apparatus membrane. Interacts with ATG9A. Mg(2+) is required as a cofactor. It depends on Mn(2+) as a cofactor.

The protein resides in the endomembrane system. The protein localises to the mitochondrion outer membrane. It localises to the rough endoplasmic reticulum membrane. Its subcellular location is the golgi apparatus. It is found in the golgi apparatus membrane. It catalyses the reaction a 1,2-diacyl-sn-glycero-3-phospho-(1D-myo-inositol) + ATP = a 1,2-diacyl-sn-glycero-3-phospho-(1D-myo-inositol 4-phosphate) + ADP + H(+). With respect to regulation, inhibited by wortmannin. Increased kinase activity upon interaction with NCS1/FREQ. In terms of biological role, phosphorylates phosphatidylinositol (PI) in the first committed step in the production of the second messenger inositol-1,4,5,-trisphosphate (PIP). May regulate Golgi disintegration/reorganization during mitosis, possibly via its phosphorylation. Involved in Golgi-to-plasma membrane trafficking. May play an important role in the inner ear development. The protein is Phosphatidylinositol 4-kinase beta (PI4KB) of Rhinolophus ferrumequinum (Greater horseshoe bat).